Reading from the N-terminus, the 499-residue chain is Low-affinity inorganic phosphate transporter PitA (499 aa).

Residues 1–4 (MLHL) are Periplasmic-facing. Residues 5–25 (FAGLDLHTGLLLLLALAFVLF) form a helical membrane-spanning segment. At 26–51 (YEAINGFHDTANAVATVIYTRAMRSQ) the chain is on the cytoplasmic side. Residues 52–72 (LAVVMAAVFNFLGVLLGGLSV) form a helical membrane-spanning segment. At 73-93 (AYAIVHMLPTDLLLNMGSSHG) the chain is on the periplasmic side. A helical membrane pass occupies residues 94-114 (LAMVFSMLLAAIIWNLGTWYF). Over 115 to 123 (GLPASSSHT) the chain is Cytoplasmic. Residues 124–144 (LIGAIIGIGLTNALMTGTSVV) form a helical membrane-spanning segment. Residues 145–154 (DALNIPKVLS) lie on the Periplasmic side of the membrane. A helical membrane pass occupies residues 155–175 (IFGSLIVSPIVGLVFAGGLIF). The Cytoplasmic segment spans residues 176-206 (LLRRYWSGTKKRARIHLTPAEREKKDGKKKP). The chain crosses the membrane as a helical span at residues 207 to 227 (PFWTRIALILSAIGVAFSHGA). Topologically, residues 228-232 (NDGQK) are periplasmic. Residues 233 to 253 (GIGLVMLVLIGVAPAGFVVNM) traverse the membrane as a helical segment. The Cytoplasmic segment spans residues 254-381 (NATGYEITRT…KSDMLSTIEY (128 aa)). The chain crosses the membrane as a helical span at residues 382–402 (APVWIIMAVALALGIGTMIGW). The Periplasmic portion of the chain corresponds to 403 to 429 (RRVATTIGEKIGKKGMTYAQGMSAQMT). The helical transmembrane segment at 430 to 450 (AAVSIGLASYTGMPVSTTHVL) threads the bilayer. The Cytoplasmic segment spans residues 451 to 472 (SSSVAGTMVVDGGGLQRKTVTS). The chain crosses the membrane as a helical span at residues 473-493 (ILMAWVFTLPAAVLLSGGLYW). Over 494 to 499 (LSLQFL) the chain is Periplasmic.

This sequence belongs to the inorganic phosphate transporter (PiT) (TC 2.A.20) family. Pit subfamily.

Its subcellular location is the cell inner membrane. The enzyme catalyses phosphate(in) + H(+)(in) = phosphate(out) + H(+)(out). Low-affinity inorganic phosphate transporter. This chain is Low-affinity inorganic phosphate transporter PitA (pitA), found in Escherichia coli O157:H7.